Reading from the N-terminus, the 577-residue chain is Phosphoethanolamine transferase EptC (577 aa).

The next 5 membrane-spanning stretches (helical) occupy residues leucine 17–isoleucine 37, asparagine 44–proline 64, isoleucine 69–tyrosine 89, tyrosine 119–tryptophan 139, and valine 154–isoleucine 174.

This sequence belongs to the phosphoethanolamine transferase family. EptC/CptA subfamily.

The protein resides in the cell inner membrane. It participates in bacterial outer membrane biogenesis; LPS core biosynthesis. Catalyzes the addition of a phosphoethanolamine moiety to the outer membrane lipopolysaccharide core. Plays a role in the pathogenesis of E.coli meningitis. Required for invasion of E.coli K1 into brain microvascular endothelial cells (BMEC). Contributes to E.coli traversal across the blood-brain barrier. The chain is Phosphoethanolamine transferase EptC (eptC) from Escherichia coli O18:K1:H7 (strain RS218 / NMEC).